Reading from the N-terminus, the 280-residue chain is Phosphatidylserine decarboxylase proenzyme (280 aa).

Catalysis depends on charge relay system; for autoendoproteolytic cleavage activity residues Asp-88, His-145, and Ser-249. Residue Ser-249 is the Schiff-base intermediate with substrate; via pyruvic acid; for decarboxylase activity of the active site. Ser-249 is modified (pyruvic acid (Ser); by autocatalysis).

It belongs to the phosphatidylserine decarboxylase family. PSD-B subfamily. Prokaryotic type I sub-subfamily. As to quaternary structure, heterodimer of a large membrane-associated beta subunit and a small pyruvoyl-containing alpha subunit. Pyruvate serves as cofactor. In terms of processing, is synthesized initially as an inactive proenzyme. Formation of the active enzyme involves a self-maturation process in which the active site pyruvoyl group is generated from an internal serine residue via an autocatalytic post-translational modification. Two non-identical subunits are generated from the proenzyme in this reaction, and the pyruvate is formed at the N-terminus of the alpha chain, which is derived from the carboxyl end of the proenzyme. The autoendoproteolytic cleavage occurs by a canonical serine protease mechanism, in which the side chain hydroxyl group of the serine supplies its oxygen atom to form the C-terminus of the beta chain, while the remainder of the serine residue undergoes an oxidative deamination to produce ammonia and the pyruvoyl prosthetic group on the alpha chain. During this reaction, the Ser that is part of the protease active site of the proenzyme becomes the pyruvoyl prosthetic group, which constitutes an essential element of the active site of the mature decarboxylase.

Its subcellular location is the cell membrane. The enzyme catalyses a 1,2-diacyl-sn-glycero-3-phospho-L-serine + H(+) = a 1,2-diacyl-sn-glycero-3-phosphoethanolamine + CO2. Its pathway is phospholipid metabolism; phosphatidylethanolamine biosynthesis; phosphatidylethanolamine from CDP-diacylglycerol: step 2/2. Functionally, catalyzes the formation of phosphatidylethanolamine (PtdEtn) from phosphatidylserine (PtdSer). The protein is Phosphatidylserine decarboxylase proenzyme of Chromobacterium violaceum (strain ATCC 12472 / DSM 30191 / JCM 1249 / CCUG 213 / NBRC 12614 / NCIMB 9131 / NCTC 9757 / MK).